We begin with the raw amino-acid sequence, 389 residues long: Homoserine O-acetyltransferase (389 aa).

Residues 1–21 are disordered; it reads MAALRAGKTNNEADQPSSPVL. The segment covering 8 to 18 has biased composition (polar residues); sequence KTNNEADQPSS. In terms of domain architecture, AB hydrolase-1 spans 56-366; the sequence is NAILVCHALT…DRGHDAFLLD (311 aa). The Nucleophile role is filled by Ser-161. Arg-231 provides a ligand contact to substrate. Residues Asp-327 and His-360 contribute to the active site. Residue Asp-361 coordinates substrate.

Belongs to the AB hydrolase superfamily. MetX family. In terms of assembly, homodimer.

Its subcellular location is the cytoplasm. It carries out the reaction L-homoserine + acetyl-CoA = O-acetyl-L-homoserine + CoA. The protein operates within amino-acid biosynthesis; L-methionine biosynthesis via de novo pathway; O-acetyl-L-homoserine from L-homoserine: step 1/1. Transfers an acetyl group from acetyl-CoA to L-homoserine, forming acetyl-L-homoserine. The chain is Homoserine O-acetyltransferase from Mesorhizobium japonicum (strain LMG 29417 / CECT 9101 / MAFF 303099) (Mesorhizobium loti (strain MAFF 303099)).